Consider the following 844-residue polypeptide: Receptor-like protein 49 (844 aa).

The signal sequence occupies residues 1–31; sequence MMYSCRERRMITVKWSLCLIFCLSNSILVFA. The Extracellular portion of the chain corresponds to 32–803; that stretch reads KHLCLPDQRD…QDEEKEEEEQ (772 aa). N-linked (GlcNAc...) asparagine glycans are attached at residues Asn59, Asn95, Asn112, and Asn159. LRR repeat units follow at residues 102–126, 136–160, 161–183, 185–208, 209–231, 242–265, 266–290, 292–313, 315–339, 345–362, 363–385, 386–409, 410–434, 436–457, 458–481, 482–504, 506–527, 528–551, 553–574, 575–601, 602–625, 665–689, 690–713, 714–737, and 739–762; these read QHLQ…GLKG, LKYL…LGNL, SYLT…SMGN, NYLR…LGNL, SYLA…SMGN, LNSL…NMSS, LSKL…LFMI, SLVE…NISS, SKLQ…IFSP, YLDV…VSLP, SPIE…LRNQ, TKLY…LWSL, PELQ…VIQG, GELY…LLPV, DSMN…ICEL, DNLV…CFEN, HLYV…EAIS, DRLQ…LINC, ALEF…WLEL, LPNF…SLSF, PRLR…YFAP, FTIY…ISLL, KELI…LSNL, SNLQ…LGEL, and FLAR…QIQT. Asn207 carries an N-linked (GlcNAc...) asparagine glycan. N-linked (GlcNAc...) asparagine glycosylation occurs at Asn262. N-linked (GlcNAc...) asparagine glycosylation is present at Asn310. 2 N-linked (GlcNAc...) asparagine glycosylation sites follow: Asn374 and Asn384. Asn416 is a glycosylation site (N-linked (GlcNAc...) asparagine). N-linked (GlcNAc...) asparagine glycosylation is found at Asn493, Asn516, and Asn550. N-linked (GlcNAc...) asparagine glycosylation is found at Asn696 and Asn712. N-linked (GlcNAc...) asparagine glycosylation occurs at Asn744. A helical transmembrane segment spans residues 804-824; the sequence is VFSWIAAAIGYVPGVVCGLTI. The Cytoplasmic portion of the chain corresponds to 825-844; the sequence is GHILVSHKRDWFMRIVSLFT.

The protein belongs to the RLP family.

The protein resides in the cell membrane. This chain is Receptor-like protein 49, found in Arabidopsis thaliana (Mouse-ear cress).